We begin with the raw amino-acid sequence, 61 residues long: Large ribosomal subunit protein eL24 (61 aa).

4 residues coordinate Zn(2+): cysteine 7, cysteine 10, cysteine 33, and cysteine 37. The C4-type zinc-finger motif lies at 7–37 (CSFCGGDIPPATGMMHVRNDGTILWFCSNKC).

It belongs to the eukaryotic ribosomal protein eL24 family. In terms of assembly, part of the 50S ribosomal subunit. Forms a cluster with proteins L3 and L14. Requires Zn(2+) as cofactor.

In terms of biological role, binds to the 23S rRNA. This chain is Large ribosomal subunit protein eL24, found in Metallosphaera sedula (strain ATCC 51363 / DSM 5348 / JCM 9185 / NBRC 15509 / TH2).